Reading from the N-terminus, the 79-residue chain is MKCATLFLVLSMVVLMAEPGDAFFHHIFRGIVHVGKTIHRLVTGGKAEQDQQDQQYQQEQQEQQAQQYQRFNRERAAFD.

Positions 1–22 (MKCATLFLVLSMVVLMAEPGDA) are cleaved as a signal peptide. Glycine 44 carries the post-translational modification Glycine amide. The disordered stretch occupies residues 45–79 (GKAEQDQQDQQYQQEQQEQQAQQYQRFNRERAAFD). A propeptide spanning residues 47–79 (AEQDQQDQQYQQEQQEQQAQQYQRFNRERAAFD) is cleaved from the precursor. Positions 52–69 (QDQQYQQEQQEQQAQQYQ) are enriched in low complexity.

As to expression, expressed in mast cells in gill, skin and gut, and in lining blood vessels in the viscera. Also in intestine, spleen, anterior kidney, and blood cells.

It is found in the secreted. Functionally, antimicrobial peptide with broad-spectrum activity against Gram-positive and Gram-negative bacteria as well as against a variety of fungi. Rapidly inactivates channel catfish herpesvirus (ED(50)=4 uM) and frog virus 3 (ED(50)=13 uM) over a wide temperature range. Seems to disrupt the membranes by adopting an alpha helical conformation and forming toroidal pores. Has hemolytic activity. In Morone saxatilis (Striped bass), this protein is Moronecidin.